The primary structure comprises 33 residues: Large ribosomal subunit protein eL28 (33 aa).

This sequence belongs to the eukaryotic ribosomal protein eL28 family. In terms of assembly, component of the large ribosomal subunit.

It is found in the cytoplasm. Its function is as follows. Component of the large ribosomal subunit. The ribosome is a large ribonucleoprotein complex responsible for the synthesis of proteins in the cell. The sequence is that of Large ribosomal subunit protein eL28 (rpl28) from Xenopus laevis (African clawed frog).